The primary structure comprises 156 residues: ATP synthase subunit b (156 aa).

Residues 5–27 traverse the membrane as a helical segment; it reads ITLIGQMITFAIFVGFTMKFVWP.

This sequence belongs to the ATPase B chain family. As to quaternary structure, F-type ATPases have 2 components, F(1) - the catalytic core - and F(0) - the membrane proton channel. F(1) has five subunits: alpha(3), beta(3), gamma(1), delta(1), epsilon(1). F(0) has three main subunits: a(1), b(2) and c(10-14). The alpha and beta chains form an alternating ring which encloses part of the gamma chain. F(1) is attached to F(0) by a central stalk formed by the gamma and epsilon chains, while a peripheral stalk is formed by the delta and b chains.

Its subcellular location is the cell inner membrane. F(1)F(0) ATP synthase produces ATP from ADP in the presence of a proton or sodium gradient. F-type ATPases consist of two structural domains, F(1) containing the extramembraneous catalytic core and F(0) containing the membrane proton channel, linked together by a central stalk and a peripheral stalk. During catalysis, ATP synthesis in the catalytic domain of F(1) is coupled via a rotary mechanism of the central stalk subunits to proton translocation. In terms of biological role, component of the F(0) channel, it forms part of the peripheral stalk, linking F(1) to F(0). This is ATP synthase subunit b from Francisella tularensis subsp. tularensis (strain WY96-3418).